We begin with the raw amino-acid sequence, 221 residues long: GTP-binding nuclear protein Ran-2 (221 aa).

In terms of domain architecture, Small GTPase Ran-type spans 10–174 (DYPSFKLVIV…LYLARKLAGD (165 aa)). Residue 21–28 (DGGTGKTT) coordinates GTP. A switch-I region spans residues 40-48 (KKYEPTIGV). Residues G71, 125-128 (NKVD), and 153-155 (SAK) each bind GTP. Positions 71 to 87 (GQEKFGGLRDGYYIHGQ) are switch-II.

Belongs to the small GTPase superfamily. Ran family. As to quaternary structure, found in a nuclear export complex with RanGTP, exportin and pre-miRNA.

Its subcellular location is the nucleus. In terms of biological role, GTP-binding protein involved in nucleocytoplasmic transport. Required for the import of protein into the nucleus and also for RNA export. Involved in chromatin condensation and control of cell cycle. The protein is GTP-binding nuclear protein Ran-2 (RAN2) of Oryza sativa subsp. indica (Rice).